Reading from the N-terminus, the 338-residue chain is Anthranilate phosphoribosyltransferase (338 aa).

5-phospho-alpha-D-ribose 1-diphosphate contacts are provided by residues glycine 80, 83–84 (GD), threonine 88, 90–93 (NIST), 108–116 (KHGNRAMSS), and serine 120. Glycine 80 contributes to the anthranilate binding site. Serine 92 contributes to the Mg(2+) binding site. Asparagine 111 provides a ligand contact to anthranilate. Arginine 166 is an anthranilate binding site. Residues aspartate 225 and glutamate 226 each contribute to the Mg(2+) site.

Belongs to the anthranilate phosphoribosyltransferase family. In terms of assembly, homodimer. The cofactor is Mg(2+).

It carries out the reaction N-(5-phospho-beta-D-ribosyl)anthranilate + diphosphate = 5-phospho-alpha-D-ribose 1-diphosphate + anthranilate. It participates in amino-acid biosynthesis; L-tryptophan biosynthesis; L-tryptophan from chorismate: step 2/5. Functionally, catalyzes the transfer of the phosphoribosyl group of 5-phosphorylribose-1-pyrophosphate (PRPP) to anthranilate to yield N-(5'-phosphoribosyl)-anthranilate (PRA). In Herpetosiphon aurantiacus (strain ATCC 23779 / DSM 785 / 114-95), this protein is Anthranilate phosphoribosyltransferase.